Reading from the N-terminus, the 88-residue chain is Phosphocarrier protein HPr (88 aa).

In terms of domain architecture, HPr spans 1-88 (MASKEFHIVV…ETMTKEGLAE (88 aa)). Residue histidine 15 is the Pros-phosphohistidine intermediate of the active site. Serine 46 carries the post-translational modification Phosphoserine; by HPrK/P.

The protein belongs to the HPr family.

It is found in the cytoplasm. Phosphorylation on Ser-46 inhibits the phosphoryl transfer from enzyme I to HPr. In terms of biological role, general (non sugar-specific) component of the phosphoenolpyruvate-dependent sugar phosphotransferase system (sugar PTS). This major carbohydrate active-transport system catalyzes the phosphorylation of incoming sugar substrates concomitantly with their translocation across the cell membrane. The phosphoryl group from phosphoenolpyruvate (PEP) is transferred to the phosphoryl carrier protein HPr by enzyme I. Phospho-HPr then transfers it to the PTS EIIA domain. P-Ser-HPr interacts with the catabolite control protein A (CcpA), forming a complex that binds to DNA at the catabolite response elements cre, operator sites preceding a large number of catabolite-regulated genes. Thus, P-Ser-HPr is a corepressor in carbon catabolite repression (CCR), a mechanism that allows bacteria to coordinate and optimize the utilization of available carbon sources. P-Ser-HPr also plays a role in inducer exclusion, in which it probably interacts with several non-PTS permeases and inhibits their transport activity. This is Phosphocarrier protein HPr (ptsH) from Lactococcus lactis subsp. lactis (strain IL1403) (Streptococcus lactis).